The following is a 206-amino-acid chain: Thiamine-phosphate synthase (206 aa).

Residues 36 to 40 and N68 contribute to the 4-amino-2-methyl-5-(diphosphooxymethyl)pyrimidine site; that span reads QLRMK. Mg(2+)-binding residues include D69 and D88. Residue S106 coordinates 4-amino-2-methyl-5-(diphosphooxymethyl)pyrimidine. 132–134 is a 2-[(2R,5Z)-2-carboxy-4-methylthiazol-5(2H)-ylidene]ethyl phosphate binding site; the sequence is TNT. K135 contacts 4-amino-2-methyl-5-(diphosphooxymethyl)pyrimidine. 2-[(2R,5Z)-2-carboxy-4-methylthiazol-5(2H)-ylidene]ethyl phosphate-binding positions include G162 and 182-183; that span reads VS.

This sequence belongs to the thiamine-phosphate synthase family. Requires Mg(2+) as cofactor.

It catalyses the reaction 2-[(2R,5Z)-2-carboxy-4-methylthiazol-5(2H)-ylidene]ethyl phosphate + 4-amino-2-methyl-5-(diphosphooxymethyl)pyrimidine + 2 H(+) = thiamine phosphate + CO2 + diphosphate. The catalysed reaction is 2-(2-carboxy-4-methylthiazol-5-yl)ethyl phosphate + 4-amino-2-methyl-5-(diphosphooxymethyl)pyrimidine + 2 H(+) = thiamine phosphate + CO2 + diphosphate. It carries out the reaction 4-methyl-5-(2-phosphooxyethyl)-thiazole + 4-amino-2-methyl-5-(diphosphooxymethyl)pyrimidine + H(+) = thiamine phosphate + diphosphate. It participates in cofactor biosynthesis; thiamine diphosphate biosynthesis; thiamine phosphate from 4-amino-2-methyl-5-diphosphomethylpyrimidine and 4-methyl-5-(2-phosphoethyl)-thiazole: step 1/1. In terms of biological role, condenses 4-methyl-5-(beta-hydroxyethyl)thiazole monophosphate (THZ-P) and 2-methyl-4-amino-5-hydroxymethyl pyrimidine pyrophosphate (HMP-PP) to form thiamine monophosphate (TMP). The sequence is that of Thiamine-phosphate synthase from Methanococcus vannielii (strain ATCC 35089 / DSM 1224 / JCM 13029 / OCM 148 / SB).